The chain runs to 151 residues: MAGKRFWILLSAAGLLLLDQLSKQWWLQNLPPGVSQSWIPGLLNLRLVWNDGAAFSLFRSGSQWLGWISLLVSVGLLIWIGRRGRQWSRWQAAAAAFLLAGSVGNGIDRWRYGAVIDGLELVPFSFPVFNLADVAINLAVLCLLIEAIRQR.

A run of 2 helical transmembrane segments spans residues 61–81 (GSQW…IWIG) and 88–107 (SRWQ…GNGI). Catalysis depends on residues Asp-117 and Asp-133. A helical membrane pass occupies residues 128 to 148 (VFNLADVAINLAVLCLLIEAI).

It belongs to the peptidase A8 family.

The protein resides in the cell inner membrane. The enzyme catalyses Release of signal peptides from bacterial membrane prolipoproteins. Hydrolyzes -Xaa-Yaa-Zaa-|-(S,diacylglyceryl)Cys-, in which Xaa is hydrophobic (preferably Leu), and Yaa (Ala or Ser) and Zaa (Gly or Ala) have small, neutral side chains.. Its pathway is protein modification; lipoprotein biosynthesis (signal peptide cleavage). Its function is as follows. This protein specifically catalyzes the removal of signal peptides from prolipoproteins. The sequence is that of Lipoprotein signal peptidase from Synechococcus sp. (strain RCC307).